A 276-amino-acid polypeptide reads, in one-letter code: 3-keto-5-aminohexanoate cleavage enzyme (276 aa).

Residue Glu14 participates in (5S)-5-amino-3-oxohexanoate binding. Positions 46 and 48 each coordinate Zn(2+). Ser82, Gly85, Thr106, and Asn108 together coordinate (5S)-5-amino-3-oxohexanoate. Glu230 serves as a coordination point for Zn(2+).

This sequence belongs to the BKACE family. Kce subfamily. As to quaternary structure, homotetramer. It depends on Zn(2+) as a cofactor.

It carries out the reaction (5S)-5-amino-3-oxohexanoate + acetyl-CoA = (3S)-3-aminobutanoyl-CoA + acetoacetate. It functions in the pathway amino-acid degradation; L-lysine degradation via acetate pathway. In terms of biological role, involved in the anaerobic fermentation of lysine. Catalyzes the reversible reaction between 3-keto-5-aminohexanoate (KAH) and acetyl-CoA to form 3-aminobutyryl-CoA and acetoacetate. The reaction involves the deprotonation of KAH, the nucleophilic addition onto acetyl-CoA and the intramolecular transfer of the CoA moiety. This chain is 3-keto-5-aminohexanoate cleavage enzyme, found in Cloacimonas acidaminovorans (strain Evry).